A 280-amino-acid polypeptide reads, in one-letter code: Cis-2,3-dihydrobiphenyl-2,3-diol dehydrogenase (280 aa).

9 to 33 contributes to the NAD(+) binding site; sequence LVTGGCAGLGRAIVDRFVCEGARVA. S142 contributes to the substrate binding site. The active-site Proton acceptor is Y155.

It belongs to the short-chain dehydrogenases/reductases (SDR) family.

The enzyme catalyses (2R,3S)-3-phenylcyclohexa-3,5-diene-1,2-diol + NAD(+) = biphenyl-2,3-diol + NADH + H(+). The protein operates within xenobiotic degradation; biphenyl degradation; 2-hydroxy-2,4-pentadienoate and benzoate from biphenyl: step 2/4. This Rhodococcus globerulus protein is Cis-2,3-dihydrobiphenyl-2,3-diol dehydrogenase (bphB).